The following is an 816-amino-acid chain: tRNA(Met) cytidine acetyltransferase TmcA (816 aa).

The ATP site is built by glutamine 265 and arginine 439. The N-acetyltransferase domain occupies 469 to 664 (ELIRKMEVYL…YTAIVIKPIS (196 aa)). Residues 589 to 591 (IAT), glutamate 629, and arginine 636 contribute to the acetyl-CoA site.

This sequence belongs to the TmcA family.

It is found in the cytoplasm. The catalysed reaction is cytidine(34) in elongator tRNA(Met) + acetyl-CoA + ATP + H2O = N(4)-acetylcytidine(34) in elongator tRNA(Met) + ADP + phosphate + CoA + H(+). It carries out the reaction a cytidine in RNA + acetyl-CoA + ATP + H2O = an N(4)-acetylcytidine in RNA + ADP + phosphate + CoA + H(+). It catalyses the reaction a cytidine in tRNA + acetyl-CoA + ATP + H2O = an N(4)-acetylcytidine in tRNA + ADP + phosphate + CoA + H(+). The enzyme catalyses a cytidine in mRNA + acetyl-CoA + ATP + H2O = an N(4)-acetylcytidine in mRNA + ADP + phosphate + CoA + H(+). In terms of biological role, catalyzes the formation of N(4)-acetylcytidine (ac(4)C) at the wobble position of tRNA(Met), by using acetyl-CoA as an acetyl donor and ATP (or GTP). Functionally, catalyzes the formation of 233 N(4)-acetylcytidine (ac(4)C) sites in RNA, on the middle C of a CCG motif. Modifications are found in rRNA, ncRNA, mRNA and tRNA. More acetylation is observed at 85 than at 65 or 75 degrees Celsius. The polypeptide is tRNA(Met) cytidine acetyltransferase TmcA (Pyrococcus furiosus (strain ATCC 43587 / DSM 3638 / JCM 8422 / Vc1)).